The sequence spans 359 residues: Aromatic amino acid aminotransferase (359 aa).

Lys-223 bears the N6-(pyridoxal phosphate)lysine mark.

Belongs to the class-II pyridoxal-phosphate-dependent aminotransferase family. Homodimer. Pyridoxal 5'-phosphate serves as cofactor.

It catalyses the reaction an aromatic L-alpha-amino acid + 2-oxoglutarate = an aromatic oxo-acid + L-glutamate. In terms of biological role, aminotransferase that catalyzes the conversion of aromatic amino acids and 2-oxoglutarate into corresponding aromatic oxo acids and L-glutamate. The sequence is that of Aromatic amino acid aminotransferase from Streptomyces avermitilis (strain ATCC 31267 / DSM 46492 / JCM 5070 / NBRC 14893 / NCIMB 12804 / NRRL 8165 / MA-4680).